Reading from the N-terminus, the 91-residue chain is Small ribosomal subunit protein uS19 (91 aa).

Belongs to the universal ribosomal protein uS19 family.

Functionally, protein S19 forms a complex with S13 that binds strongly to the 16S ribosomal RNA. The chain is Small ribosomal subunit protein uS19 from Azotobacter vinelandii (strain DJ / ATCC BAA-1303).